A 258-amino-acid polypeptide reads, in one-letter code: Small ribosomal subunit protein mS40 (258 aa).

The N-terminal 35 residues, 1–35 (MAASVLNTLLRRLPMLSLFRGAHRVQVPLQTLCTK), are a transit peptide targeting the mitochondrion. 2 positions are modified to phosphoserine: Ser38 and Ser49. Positions 218–258 (RLYQGHLREESGPPPESMPKMPPTAPAEASFTGQTDPQSAL) are disordered. The segment covering 229–242 (GPPPESMPKMPPTA) has biased composition (pro residues). Residues 248-258 (FTGQTDPQSAL) show a composition bias toward polar residues.

The protein belongs to the bacterial ribosomal protein bS18 family. Mitochondrion-specific ribosomal protein mS40 subfamily. As to quaternary structure, component of the mitochondrial ribosome small subunit (28S) which comprises a 12S rRNA and about 30 distinct proteins.

The protein resides in the mitochondrion. The sequence is that of Small ribosomal subunit protein mS40 (MRPS18B) from Macaca mulatta (Rhesus macaque).